The primary structure comprises 348 residues: tRNA N6-adenosine threonylcarbamoyltransferase (348 aa).

Fe cation-binding residues include His116 and His120. Substrate is bound by residues 138–142 (IISGG), Asp171, Gly184, and Asn282. Asp310 lines the Fe cation pocket.

Belongs to the KAE1 / TsaD family. Fe(2+) serves as cofactor.

Its subcellular location is the cytoplasm. It catalyses the reaction L-threonylcarbamoyladenylate + adenosine(37) in tRNA = N(6)-L-threonylcarbamoyladenosine(37) in tRNA + AMP + H(+). Its function is as follows. Required for the formation of a threonylcarbamoyl group on adenosine at position 37 (t(6)A37) in tRNAs that read codons beginning with adenine. Is involved in the transfer of the threonylcarbamoyl moiety of threonylcarbamoyl-AMP (TC-AMP) to the N6 group of A37, together with TsaE and TsaB. TsaD likely plays a direct catalytic role in this reaction. This is tRNA N6-adenosine threonylcarbamoyltransferase from Ehrlichia ruminantium (strain Gardel).